The sequence spans 221 residues: Casparian strip membrane protein 2 (221 aa).

Residues 1–21 form a disordered region; that stretch reads MEKSEATTIEIGETSRESKGK. The Cytoplasmic segment spans residues 1–41; that stretch reads MEKSEATTIEIGETSRESKGKTPLLAEVEQTARTAGSYRRG. The chain crosses the membrane as a helical span at residues 42 to 62; sequence VAIFDLILRVSAATSALAATI. The Extracellular portion of the chain corresponds to 63 to 89; it reads TMGTTEQTLPFFTQFFQFQASYDDLPA. Residues 90-110 traverse the membrane as a helical segment; that stretch reads FTFFVIALSIVTGYLVLSVPF. Residues 111–131 are Cytoplasmic-facing; the sequence is SVVCIAQPLAAVPRLLLIVCD. Residues 132–152 form a helical membrane-spanning segment; it reads TLTVTLATAAASSSAAIVYLA. Topologically, residues 153-221 are extracellular; sequence HNGNADANWL…HYWDRRWCEI (69 aa).

The protein belongs to the Casparian strip membrane proteins (CASP) family. In terms of assembly, homodimer and heterodimers.

The protein localises to the cell membrane. Its function is as follows. Regulates membrane-cell wall junctions and localized cell wall deposition. Required for establishment of the Casparian strip membrane domain (CSD) and the subsequent formation of Casparian strips, a cell wall modification of the root endodermis that determines an apoplastic barrier between the intraorganismal apoplasm and the extraorganismal apoplasm and prevents lateral diffusion. This Erythranthe guttata (Yellow monkey flower) protein is Casparian strip membrane protein 2.